A 303-amino-acid polypeptide reads, in one-letter code: Aspartate carbamoyltransferase catalytic subunit (303 aa).

Residues Arg-48 and Thr-49 each coordinate carbamoyl phosphate. Position 76 (Lys-76) interacts with L-aspartate. Residues Arg-98, His-129, and Gln-132 each coordinate carbamoyl phosphate. The L-aspartate site is built by Arg-162 and Arg-214. Carbamoyl phosphate is bound by residues Ala-257 and Pro-258.

This sequence belongs to the aspartate/ornithine carbamoyltransferase superfamily. ATCase family. As to quaternary structure, heterododecamer (2C3:3R2) of six catalytic PyrB chains organized as two trimers (C3), and six regulatory PyrI chains organized as three dimers (R2).

It carries out the reaction carbamoyl phosphate + L-aspartate = N-carbamoyl-L-aspartate + phosphate + H(+). Its pathway is pyrimidine metabolism; UMP biosynthesis via de novo pathway; (S)-dihydroorotate from bicarbonate: step 2/3. Its function is as follows. Catalyzes the condensation of carbamoyl phosphate and aspartate to form carbamoyl aspartate and inorganic phosphate, the committed step in the de novo pyrimidine nucleotide biosynthesis pathway. The polypeptide is Aspartate carbamoyltransferase catalytic subunit (Leuconostoc citreum (strain KM20)).